The following is a 321-amino-acid chain: MKSIYKYTFMLFVFLFGTLMMAEDITGEIVVFHAGSLSVPFAQIEKAFESQYPGTDVIREAAGSREAVRKVTDLGREADVIGSADYTVIENLMIPEYTEWYINFANNEMVIMYTEDSRYKDEINSDNWYEILLRPDVEYGHSDPNADPCGYRSQIVWKLAEKYYKVDSLYKKLADNCPPKNVRPKETDLIALLEAGELDYIFIYKSVALQHRMPYVELPEQINLKSTKYADFYATASFDVTGKEPGEMITQIGQPMVYALTIPNNAPNLQGAIAFIKFVIGPQGRAIMEENGQPSINPPEGVNIEKAPQELQDFLKGGAND.

The first 22 residues, 1–22 (MKSIYKYTFMLFVFLFGTLMMA), serve as a signal peptide directing secretion.

The protein belongs to the bacterial solute-binding protein 1 family. WtpA subfamily.

This is an uncharacterized protein from Petrotoga mobilis (strain DSM 10674 / SJ95).